Reading from the N-terminus, the 543-residue chain is Probable protein kinase UbiB (543 aa).

Positions 123 to 500 (DFDQQPLASA…HRRHAQARFL (378 aa)) constitute a Protein kinase domain. ATP is bound by residues 129-137 (LASASVAQV) and Lys-152. Asp-286 functions as the Proton acceptor in the catalytic mechanism. A run of 2 helical transmembrane segments spans residues 499 to 519 (FLLG…PTHE) and 521 to 541 (LASA…WKIS).

It belongs to the ABC1 family. UbiB subfamily.

Its subcellular location is the cell inner membrane. Its pathway is cofactor biosynthesis; ubiquinone biosynthesis [regulation]. Its function is as follows. Is probably a protein kinase regulator of UbiI activity which is involved in aerobic coenzyme Q (ubiquinone) biosynthesis. In Tolumonas auensis (strain DSM 9187 / NBRC 110442 / TA 4), this protein is Probable protein kinase UbiB.